We begin with the raw amino-acid sequence, 336 residues long: HTH-type transcriptional repressor PurR (336 aa).

The HTH lacI-type domain maps to 2-56 (ATIKDVARLAGVSTTTVSHVINKTRFVAETTQEKVMEAVKQLNYAPSAVARSLKC). The H-T-H motif DNA-binding region spans 4-23 (IKDVARLAGVSTTTVSHVIN). A DNA-binding region spans residues 48–56 (SAVARSLKC). The hypoxanthine site is built by Phe73, Lys189, Phe220, and Asp274.

In terms of assembly, homodimer.

It participates in purine metabolism; purine nucleotide biosynthesis [regulation]. In terms of biological role, is the main repressor of the genes involved in the de novo synthesis of purine nucleotides, regulating purB, purC, purEK, purF, purHD, purL, purMN and guaBA expression. PurR is allosterically activated to bind its cognate DNA by binding the purine corepressors, hypoxanthine or guanine, thereby effecting transcription repression. The polypeptide is HTH-type transcriptional repressor PurR (Vibrio cholerae serotype O1 (strain ATCC 39315 / El Tor Inaba N16961)).